The primary structure comprises 466 residues: Sucrose-6-phosphate hydrolase (466 aa).

Substrate is bound by residues 38-41 (LMND), glutamine 57, 100-101 (YS), 159-160 (RD), and glutamate 218. Aspartate 41 is a catalytic residue.

It belongs to the glycosyl hydrolase 32 family.

It is found in the cytoplasm. The catalysed reaction is Hydrolysis of terminal non-reducing beta-D-fructofuranoside residues in beta-D-fructofuranosides.. Its pathway is glycan biosynthesis; sucrose metabolism. Enables the bacterium to metabolize sucrose as a sole carbon source. This Salmonella typhimurium protein is Sucrose-6-phosphate hydrolase (scrB).